Consider the following 310-residue polypeptide: Nodulation protein D 1 (310 aa).

Residues 6-63 (LDLNLLVALDALMTERQLTAAARRINLSQPAMSAAIARLRNYFHDDLFVMQGRELILT) form the HTH lysR-type domain. The segment at residues 23-42 (LTAAARRINLSQPAMSAAIA) is a DNA-binding region (H-T-H motif).

This sequence belongs to the LysR transcriptional regulatory family.

Its function is as follows. NodD regulates the expression of the nodABCFE genes which encode other nodulation proteins. NodD is also a negative regulator of its own expression. Binds flavonoids as inducers. The sequence is that of Nodulation protein D 1 (nodD1) from Neorhizobium galegae (Rhizobium galegae).